A 424-amino-acid chain; its full sequence is Elongation factor Tu, mitochondrial (424 aa).

The tr-type G domain occupies 36-234; the sequence is KPHVNVGTIG…VLDTKIPLPH (199 aa). A G1 region spans residues 45–52; that stretch reads GHVDHGKT. 45–52 provides a ligand contact to GTP; that stretch reads GHVDHGKT. The segment at 86-90 is G2; that stretch reads GITIT. Residues 107 to 110 form a G3 region; sequence DCPG. Residues 107 to 111 and 162 to 165 each bind GTP; these read DCPGH and NKMD. Positions 162-165 are G4; that stretch reads NKMD. The G5 stretch occupies residues 199–201; the sequence is AAA.

This sequence belongs to the TRAFAC class translation factor GTPase superfamily. Classic translation factor GTPase family. EF-Tu/EF-1A subfamily.

Its subcellular location is the mitochondrion. Functionally, this protein promotes the GTP-dependent binding of aminoacyl-tRNA to the A-site of ribosomes during protein biosynthesis. This chain is Elongation factor Tu, mitochondrial (tufm), found in Dictyostelium discoideum (Social amoeba).